The chain runs to 1249 residues: Myosin-1 (1249 aa).

The disordered stretch occupies residues Met1–Thr42. The region spanning Ile51 to Asp730 is the Myosin motor domain. Gly144–Thr151 provides a ligand contact to ATP. Ser372 bears the Phosphoserine mark. Positions Ser419 to Ala501 are actin-binding. IQ domains follow at residues His734–Cys754 and Ala755–Gln780. The TH1 domain maps to Arg788–Ala978. 2 disordered regions span residues Asp962–Pro1079 and Trp1126–Trp1249. Residues Ala1021–Pro1035 show a composition bias toward pro residues. Positions Gln1036 to Ala1051 are enriched in low complexity. 2 stretches are compositionally biased toward pro residues: residues Ala1064–Lys1077 and Thr1139–Ala1150. The 62-residue stretch at Pro1076 to Ala1137 folds into the SH3 domain. Positions Pro1151–Lys1169 are enriched in low complexity. The span at Val1200–Asn1221 shows a compositional bias: polar residues. Over residues Ala1222–Ala1231 the composition is skewed to low complexity.

This sequence belongs to the TRAFAC class myosin-kinesin ATPase superfamily. Myosin family. Post-translationally, phosphorylation of the TEDS site (Ser-372) is required for the polarization of the actin cytoskeleton. Phosphorylation probably activates the myosin-I ATPase activity.

It is found in the cytoplasm. Its subcellular location is the cytoskeleton. The protein resides in the actin patch. Its function is as follows. Type-I myosin implicated in the organization of the actin cytoskeleton. Required for proper actin cytoskeleton polarization. At the cell cortex, assembles in patch-like structures together with proteins from the actin-polymerizing machinery and promotes actin assembly. Functions as actin nucleation-promoting factor (NPF) for the Arp2/3 complex. Plays an important role in polarized growth, spore germination, hyphal morphogenesis, and septal wall formation. The polypeptide is Myosin-1 (myoA) (Aspergillus fumigatus (strain ATCC MYA-4609 / CBS 101355 / FGSC A1100 / Af293) (Neosartorya fumigata)).